A 671-amino-acid polypeptide reads, in one-letter code: Acetyl-coenzyme A synthetase (671 aa).

A disordered region spans residues 1–21 (MPTASASESSSNQPESSNASG). CoA contacts are provided by residues 221–224 (RRGK), Thr339, and Asn363. ATP contacts are provided by residues 415 to 417 (GEG), 439 to 444 (DTWWQT), Asp528, and Arg543. Residue Ser551 coordinates CoA. Arg554 serves as a coordination point for ATP. The Mg(2+) site is built by Val565, His567, and Val570. Arg611 contributes to the CoA binding site. At Lys636 the chain carries N6-acetyllysine.

This sequence belongs to the ATP-dependent AMP-binding enzyme family. Mg(2+) is required as a cofactor. In terms of processing, acetylated. Deacetylation by the SIR2-homolog deacetylase activates the enzyme.

The enzyme catalyses acetate + ATP + CoA = acetyl-CoA + AMP + diphosphate. Functionally, catalyzes the conversion of acetate into acetyl-CoA (AcCoA), an essential intermediate at the junction of anabolic and catabolic pathways. AcsA undergoes a two-step reaction. In the first half reaction, AcsA combines acetate with ATP to form acetyl-adenylate (AcAMP) intermediate. In the second half reaction, it can then transfer the acetyl group from AcAMP to the sulfhydryl group of CoA, forming the product AcCoA. This chain is Acetyl-coenzyme A synthetase, found in Rhodopirellula baltica (strain DSM 10527 / NCIMB 13988 / SH1).